A 122-amino-acid polypeptide reads, in one-letter code: Large ribosomal subunit protein bL17 (122 aa).

This sequence belongs to the bacterial ribosomal protein bL17 family. As to quaternary structure, part of the 50S ribosomal subunit. Contacts protein L32.

The sequence is that of Large ribosomal subunit protein bL17 from Staphylococcus carnosus (strain TM300).